The chain runs to 1199 residues: DNA polymerase beta (1199 aa).

It belongs to the DNA polymerase type-B family.

It carries out the reaction DNA(n) + a 2'-deoxyribonucleoside 5'-triphosphate = DNA(n+1) + diphosphate. In terms of biological role, DNA-directed DNA polymerase involved in viral DNA replication. This Ornithodoros (relapsing fever ticks) protein is DNA polymerase beta.